We begin with the raw amino-acid sequence, 126 residues long: Fluoride-specific ion channel FluC (126 aa).

The next 4 helical transmembrane spans lie at 5-25, 34-54, 67-87, and 95-115; these read IAVI…FALW, WGTL…LAVF, LVIT…GEVV, and FGLA…LTWA. Residues G74 and T77 each contribute to the Na(+) site.

Belongs to the fluoride channel Fluc/FEX (TC 1.A.43) family.

The protein localises to the cell inner membrane. The enzyme catalyses fluoride(in) = fluoride(out). Its activity is regulated as follows. Na(+) is not transported, but it plays an essential structural role and its presence is essential for fluoride channel function. Its function is as follows. Fluoride-specific ion channel. Important for reducing fluoride concentration in the cell, thus reducing its toxicity. The protein is Fluoride-specific ion channel FluC of Paracidovorax citrulli (strain AAC00-1) (Acidovorax citrulli).